The chain runs to 375 residues: Chaperone protein DnaJ (375 aa).

In terms of domain architecture, J spans 5-70 (DYYELLGISR…EKRAAYDQYG (66 aa)). The CR-type zinc-finger motif lies at 132–210 (GTTKDIKIHT…CHGDGRVNKA (79 aa)). Residues C145, C148, C162, C165, C184, C187, C198, and C201 each coordinate Zn(2+). CXXCXGXG motif repeat units follow at residues 145 to 152 (CDTCHGTG), 162 to 169 (CPHCHGAG), 184 to 191 (CHFCHGTG), and 198 to 205 (CKTCHGDG).

This sequence belongs to the DnaJ family. Homodimer. Zn(2+) is required as a cofactor.

The protein localises to the cytoplasm. Its function is as follows. Participates actively in the response to hyperosmotic and heat shock by preventing the aggregation of stress-denatured proteins and by disaggregating proteins, also in an autonomous, DnaK-independent fashion. Unfolded proteins bind initially to DnaJ; upon interaction with the DnaJ-bound protein, DnaK hydrolyzes its bound ATP, resulting in the formation of a stable complex. GrpE releases ADP from DnaK; ATP binding to DnaK triggers the release of the substrate protein, thus completing the reaction cycle. Several rounds of ATP-dependent interactions between DnaJ, DnaK and GrpE are required for fully efficient folding. Also involved, together with DnaK and GrpE, in the DNA replication of plasmids through activation of initiation proteins. The polypeptide is Chaperone protein DnaJ (Aggregatibacter actinomycetemcomitans (Actinobacillus actinomycetemcomitans)).